Here is a 241-residue protein sequence, read N- to C-terminus: ATP synthase subunit a (241 aa).

A run of 5 helical transmembrane segments spans residues 30-50, 91-111, 128-148, 193-213, and 214-234; these read GQVFMTSWLLIGALLTLVVVG, FIGTLFLFIFVSNWGGALVPW, INTTVALALLVSLSYFYAGLS, LVVAVLVFLVPLVLPVPVMFL, and GLFTSAIQALIFATLAAYYIG.

Belongs to the ATPase A chain family. In terms of assembly, F-type ATPases have 2 components, CF(1) - the catalytic core - and CF(0) - the membrane proton channel. CF(1) has five subunits: alpha(3), beta(3), gamma(1), delta(1), epsilon(1). CF(0) has four main subunits: a, b, b' and c.

The protein localises to the cellular thylakoid membrane. Functionally, key component of the proton channel; it plays a direct role in the translocation of protons across the membrane. The sequence is that of ATP synthase subunit a from Prochlorococcus marinus (strain MIT 9211).